The sequence spans 315 residues: Ferrochelatase (315 aa).

Residues H193 and E273 each contribute to the Fe cation site.

Belongs to the ferrochelatase family.

The protein localises to the cytoplasm. The enzyme catalyses heme b + 2 H(+) = protoporphyrin IX + Fe(2+). It functions in the pathway porphyrin-containing compound metabolism; protoheme biosynthesis; protoheme from protoporphyrin-IX: step 1/1. Its function is as follows. Catalyzes the ferrous insertion into protoporphyrin IX. This chain is Ferrochelatase, found in Wolbachia pipientis wMel.